The primary structure comprises 501 residues: Ribose import ATP-binding protein RbsA (501 aa).

2 ABC transporter domains span residues 6 to 242 (LQLS…VGRK) and 253 to 495 (KHGE…VGKK). ATP is bound at residue 38 to 45 (GENGAGKS).

It belongs to the ABC transporter superfamily. Ribose importer (TC 3.A.1.2.1) family. The complex is composed of an ATP-binding protein (RbsA), two transmembrane proteins (RbsC) and a solute-binding protein (RbsB).

Its subcellular location is the cell inner membrane. It catalyses the reaction D-ribose(out) + ATP + H2O = D-ribose(in) + ADP + phosphate + H(+). Functionally, part of the ABC transporter complex RbsABC involved in ribose import. Responsible for energy coupling to the transport system. This Vibrio parahaemolyticus serotype O3:K6 (strain RIMD 2210633) protein is Ribose import ATP-binding protein RbsA.